Consider the following 161-residue polypeptide: MPSFDVVCEANMVEVKNAVEQANKEISTRFDFKGSDSRVEHKEQELTLFADDDFKIEQVNDVLMNKLAKRNVDVRFLDYQDKQKIGGDKMKQVVKIKKGVSGDLAKKIVKTIKDSKIKVQASIQGDAVRVTGAKRDDLQSVIAMLRKEVSDTPLDFNNFRD.

It belongs to the YajQ family.

Functionally, nucleotide-binding protein. The protein is Nucleotide-binding protein Rpic_2826 of Ralstonia pickettii (strain 12J).